The following is a 175-amino-acid chain: ATP-dependent protease subunit HslV (175 aa).

Thr2 is an active-site residue. The Na(+) site is built by Ala156, Cys159, and Thr162.

The protein belongs to the peptidase T1B family. HslV subfamily. A double ring-shaped homohexamer of HslV is capped on each side by a ring-shaped HslU homohexamer. The assembly of the HslU/HslV complex is dependent on binding of ATP.

It is found in the cytoplasm. It carries out the reaction ATP-dependent cleavage of peptide bonds with broad specificity.. With respect to regulation, allosterically activated by HslU binding. Functionally, protease subunit of a proteasome-like degradation complex believed to be a general protein degrading machinery. The sequence is that of ATP-dependent protease subunit HslV from Rhizobium johnstonii (strain DSM 114642 / LMG 32736 / 3841) (Rhizobium leguminosarum bv. viciae).